The sequence spans 739 residues: Exocyst complex component 3-like protein (739 aa).

The interval 1–370 is mediates interaction with EXOC2, EXOC4 and EXOC5; that stretch reads MDSAARDKTQ…DVSDLEPLLT (370 aa).

This sequence belongs to the SEC6 family. As to quaternary structure, interacts with EXOC2, EXOC4 and EXOC5; may be part of the exocyst.

Its subcellular location is the cytoplasmic vesicle. It is found in the secretory vesicle. In terms of biological role, as part of the exocyst, may play a role in regulated exocytosis of insulin granules. This chain is Exocyst complex component 3-like protein (EXOC3L1), found in Bos taurus (Bovine).